The following is a 284-amino-acid chain: Tropomyosin (284 aa).

Residues M1–Y284 are a coiled coil. Residues T110–N142 are compositionally biased toward basic and acidic residues. The segment at T110–T143 is disordered.

The protein belongs to the tropomyosin family.

In terms of biological role, tropomyosin, in association with the troponin complex, plays a central role in the calcium dependent regulation of muscle contraction. The chain is Tropomyosin from Anisakis simplex (Herring worm).